Here is a 579-residue protein sequence, read N- to C-terminus: Arginine--tRNA ligase (579 aa).

The 'HIGH' region motif lies at 123 to 133; the sequence is ANPTGPVHVGR.

It belongs to the class-I aminoacyl-tRNA synthetase family.

The protein resides in the cytoplasm. It carries out the reaction tRNA(Arg) + L-arginine + ATP = L-arginyl-tRNA(Arg) + AMP + diphosphate. The polypeptide is Arginine--tRNA ligase (Haloarcula marismortui (strain ATCC 43049 / DSM 3752 / JCM 8966 / VKM B-1809) (Halobacterium marismortui)).